The following is a 492-amino-acid chain: Propanoyl-CoA:succinate CoA transferase (492 aa).

CoA is bound at residue 260–264; that stretch reads GVGNI. The 5-glutamyl coenzyme A thioester intermediate role is filled by Glu286. The CoA site is built by Asn376 and Gly380.

It belongs to the acetyl-CoA hydrolase/transferase family.

The catalysed reaction is propanoyl-CoA + succinate = propanoate + succinyl-CoA. Catalyzes the transfer of coenzyme A from propionyl-CoA to succinate. Could be part of a pathway that converts succinate to propionate. The polypeptide is Propanoyl-CoA:succinate CoA transferase (Escherichia coli (strain K12)).